A 310-amino-acid polypeptide reads, in one-letter code: Pirin-like protein At1g50590 (310 aa).

This sequence belongs to the pirin family.

Its subcellular location is the nucleus. The protein is Pirin-like protein At1g50590 of Arabidopsis thaliana (Mouse-ear cress).